Reading from the N-terminus, the 154-residue chain is Endoribonuclease YbeY (154 aa).

Zn(2+)-binding residues include H113, H117, and H123.

The protein belongs to the endoribonuclease YbeY family. The cofactor is Zn(2+).

It localises to the cytoplasm. Its function is as follows. Single strand-specific metallo-endoribonuclease involved in late-stage 70S ribosome quality control and in maturation of the 3' terminus of the 16S rRNA. The sequence is that of Endoribonuclease YbeY from Aeromonas salmonicida (strain A449).